Here is a 241-residue protein sequence, read N- to C-terminus: 1-(5-phosphoribosyl)-5-[(5-phosphoribosylamino)methylideneamino] imidazole-4-carboxamide isomerase (241 aa).

D8 acts as the Proton acceptor in catalysis. The Proton donor role is filled by D130.

Belongs to the HisA/HisF family.

It is found in the cytoplasm. It catalyses the reaction 1-(5-phospho-beta-D-ribosyl)-5-[(5-phospho-beta-D-ribosylamino)methylideneamino]imidazole-4-carboxamide = 5-[(5-phospho-1-deoxy-D-ribulos-1-ylimino)methylamino]-1-(5-phospho-beta-D-ribosyl)imidazole-4-carboxamide. Its pathway is amino-acid biosynthesis; L-histidine biosynthesis; L-histidine from 5-phospho-alpha-D-ribose 1-diphosphate: step 4/9. This is 1-(5-phosphoribosyl)-5-[(5-phosphoribosylamino)methylideneamino] imidazole-4-carboxamide isomerase from Leptospira interrogans serogroup Icterohaemorrhagiae serovar copenhageni (strain Fiocruz L1-130).